The primary structure comprises 416 residues: Transcription termination factor Rho (416 aa).

One can recognise a Rho RNA-BD domain in the interval 51–121 (LIYSYGELDI…LKLIYVNGEK (71 aa)). Residues 162–167 (GKGQRG), 174–179 (KAGKTT), and arginine 205 each bind ATP.

The protein belongs to the Rho family. In terms of assembly, homohexamer. The homohexamer assembles into an open ring structure.

Functionally, facilitates transcription termination by a mechanism that involves Rho binding to the nascent RNA, activation of Rho's RNA-dependent ATPase activity, and release of the mRNA from the DNA template. In Streptobacillus moniliformis (strain ATCC 14647 / DSM 12112 / NCTC 10651 / 9901), this protein is Transcription termination factor Rho.